The chain runs to 209 residues: Redox-sensing transcriptional repressor Rex (209 aa).

Positions leucine 16–phenylalanine 55 form a DNA-binding region, H-T-H motif. Glycine 90–glycine 95 contributes to the NAD(+) binding site.

Belongs to the transcriptional regulatory Rex family. Homodimer.

It localises to the cytoplasm. In terms of biological role, modulates transcription in response to changes in cellular NADH/NAD(+) redox state. The polypeptide is Redox-sensing transcriptional repressor Rex (Bacillus cereus (strain AH187)).